We begin with the raw amino-acid sequence, 273 residues long: Sulfur carrier protein FdhD (273 aa).

The active-site Cysteine persulfide intermediate is the Cys-124. 263-268 provides a ligand contact to Mo-bis(molybdopterin guanine dinucleotide); it reads FCRQSR.

It belongs to the FdhD family.

The protein resides in the cytoplasm. Functionally, required for formate dehydrogenase (FDH) activity. Acts as a sulfur carrier protein that transfers sulfur from IscS to the molybdenum cofactor prior to its insertion into FDH. The polypeptide is Sulfur carrier protein FdhD (Acinetobacter baylyi (strain ATCC 33305 / BD413 / ADP1)).